A 122-amino-acid polypeptide reads, in one-letter code: Large ribosomal subunit protein uL14 (122 aa).

The protein belongs to the universal ribosomal protein uL14 family. As to quaternary structure, part of the 50S ribosomal subunit. Forms a cluster with proteins L3 and L19. In the 70S ribosome, L14 and L19 interact and together make contacts with the 16S rRNA in bridges B5 and B8.

Binds to 23S rRNA. Forms part of two intersubunit bridges in the 70S ribosome. This chain is Large ribosomal subunit protein uL14, found in Thermomicrobium roseum (strain ATCC 27502 / DSM 5159 / P-2).